Reading from the N-terminus, the 146-residue chain is UPF0742 protein PB2B2.17c (146 aa).

Residues 38 to 60 (LTVKYCLAVKLLIYLLYCWYIYS) traverse the membrane as a helical segment.

The protein belongs to the UPF0742 family.

Its subcellular location is the cytoplasm. It localises to the nucleus membrane. The polypeptide is UPF0742 protein PB2B2.17c (Schizosaccharomyces pombe (strain 972 / ATCC 24843) (Fission yeast)).